The primary structure comprises 675 residues: Potassium-transporting ATPase ATP-binding subunit 2 (675 aa).

4 helical membrane passes run 34–54 (IMFV…FPDI), 65–85 (LITI…SEAF), 216–236 (IALF…IVTL), and 245–265 (LILP…TTIG). The active-site 4-aspartylphosphate intermediate is the aspartate 304. Residues aspartate 341, glutamate 345, 372 to 379 (FTAETRMS), and lysine 390 contribute to the ATP site. The Mg(2+) site is built by aspartate 513 and aspartate 517. 3 consecutive transmembrane segments (helical) span residues 569-591 (ALTT…ALMM), 611-631 (AIIS…PIAM), and 644-664 (IFIN…FLGI).

The protein belongs to the cation transport ATPase (P-type) (TC 3.A.3) family. Type IA subfamily. As to quaternary structure, the system is composed of three essential subunits: KdpA, KdpB and KdpC.

The protein localises to the cell membrane. The enzyme catalyses K(+)(out) + ATP + H2O = K(+)(in) + ADP + phosphate + H(+). In terms of biological role, part of the high-affinity ATP-driven potassium transport (or Kdp) system, which catalyzes the hydrolysis of ATP coupled with the electrogenic transport of potassium into the cytoplasm. This subunit is responsible for energy coupling to the transport system and for the release of the potassium ions to the cytoplasm. The protein is Potassium-transporting ATPase ATP-binding subunit 2 of Staphylococcus aureus (strain MRSA252).